The sequence spans 514 residues: Intracellular exo-alpha-L-arabinofuranosidase (514 aa).

Positions 47 and 194 each coordinate alpha-L-arabinofuranose. Glutamate 195 serves as the catalytic Proton donor/acceptor. Tyrosine 261, glutamate 317, and glutamine 366 together coordinate alpha-L-arabinofuranose. Glutamate 317 functions as the Nucleophile in the catalytic mechanism.

It belongs to the glycosyl hydrolase 51 family. As to quaternary structure, homohexamer; trimer of dimers.

It is found in the cytoplasm. The enzyme catalyses Hydrolysis of terminal non-reducing alpha-L-arabinofuranoside residues in alpha-L-arabinosides.. It functions in the pathway glycan metabolism; L-arabinan degradation. In terms of biological role, involved in the degradation of arabinan and is a key enzyme in the complete degradation of the plant cell wall. Catalyzes the cleavage of terminal alpha-L-arabinofuranosyl residues in different hemicellulosic homopolysaccharides (branched and debranched arabinans) and heteropolysaccharides (arabinoxylans). This Bacteroides ovatus protein is Intracellular exo-alpha-L-arabinofuranosidase (asdII).